The primary structure comprises 129 residues: UPF0148 protein AF_2370 (129 aa).

The segment at 61–80 (SAAKAESEEKPPESTKPAVK) is disordered.

The protein belongs to the UPF0148 family.

In Archaeoglobus fulgidus (strain ATCC 49558 / DSM 4304 / JCM 9628 / NBRC 100126 / VC-16), this protein is UPF0148 protein AF_2370.